The chain runs to 397 residues: Mannonate dehydratase (397 aa).

It belongs to the mannonate dehydratase family. Fe(2+) is required as a cofactor. It depends on Mn(2+) as a cofactor.

It carries out the reaction D-mannonate = 2-dehydro-3-deoxy-D-gluconate + H2O. It participates in carbohydrate metabolism; pentose and glucuronate interconversion. Catalyzes the dehydration of D-mannonate. The protein is Mannonate dehydratase of Yersinia pestis bv. Antiqua (strain Antiqua).